The sequence spans 356 residues: Solute carrier family 25 member 3 (356 aa).

The transit peptide at 1 to 44 (MFSSVAHLARANPFNAPHLQLVHDVSGPRSPPGPPRRSRHLAAA) directs the protein to the mitochondrion. Residues 45–57 (AVEGYSCEFGSMK) lie on the Mitochondrial intermembrane side of the membrane. Solcar repeat units follow at residues 57-141 (KYYA…FKAL), 154-238 (WRTS…TVEA), and 255-333 (EQLV…VKVY). The helical transmembrane segment at 58–80 (YYALCGFGGVLSCGLTHTAVVPL) threads the bilayer. Residues 81-115 (DLVKCRMQVDPQKYKGIFNGFSITLKEDGVRGLAK) are Mitochondrial matrix-facing. N6-acetyllysine is present on lysine 93. Lysine 106 bears the N6-methyllysine mark. Residues 116–135 (GWAPTLIGYSMQGLCKFGFY) form a helical membrane-spanning segment. The Mitochondrial intermembrane portion of the chain corresponds to 136 to 155 (EVFKALYSNILGEENTYLWR). Residues 156–177 (TSLYLAASASAEFFADIALAPM) form a helical membrane-spanning segment. Residues 178–212 (EAAKVRIQTQPGYANTLREAVPKMYKEEGLNAFYK) lie on the Mitochondrial matrix side of the membrane. Tyrosine 190 is modified (phosphotyrosine). Residue lysine 203 is modified to N6-acetyllysine. A helical membrane pass occupies residues 213 to 232 (GVAPVWMRQIPYTMMKFACF). The Mitochondrial intermembrane portion of the chain corresponds to 233–255 (ERTVEALYKFVVPKPRSECTKAE). Residues 256-278 (QLVVTFVAGYIAGVFCAIVSHPA) traverse the membrane as a helical segment. The Mitochondrial matrix segment spans residues 279–308 (DSVVSVLNKEKGSTASQVLQRLGFRGVWKG). The chain crosses the membrane as a helical span at residues 309–327 (LFARIIMIGTLTALQWFIY). Residues 328–356 (DSVKVYFRLPRPPPPEMPESLKKKLGLTE) are Mitochondrial intermembrane-facing.

It belongs to the mitochondrial carrier (TC 2.A.29) family. As to quaternary structure, interacts with PPIF; the interaction is impaired by CsA.

It localises to the mitochondrion inner membrane. The catalysed reaction is phosphate(in) + H(+)(in) = phosphate(out) + H(+)(out). In terms of biological role, inorganic ion transporter that transports phosphate or copper ions across the mitochondrial inner membrane into the matrix compartment. Mediates proton-coupled symport of phosphate ions necessary for mitochondrial oxidative phosphorylation of ADP to ATP. Transports copper ions probably in the form of anionic copper(I) complexes to maintain mitochondrial matrix copper pool and to supply copper for cytochrome C oxidase complex assembly. May also play a role in regulation of the mitochondrial permeability transition pore (mPTP). The polypeptide is Solute carrier family 25 member 3 (Rattus norvegicus (Rat)).